Reading from the N-terminus, the 293-residue chain is FAS1 domain-containing protein DEHA2G15708g (293 aa).

The signal sequence occupies residues 1–18 (MKLSSILYVSVLAHLVMS). The segment covering 76-87 (DHIGENEKREAK) has biased composition (basic and acidic residues). The disordered stretch occupies residues 76-126 (DHIGENEKREAKNVYNLQSLKEGLDDENDKREGNVNKPEVSEEGSNKGDKR). The 150-residue stretch at 141 to 290 (QNLLQSILPQ…GYIFVINDVL (150 aa)) folds into the FAS1 domain.

The protein localises to the vacuole. The protein is FAS1 domain-containing protein DEHA2G15708g of Debaryomyces hansenii (strain ATCC 36239 / CBS 767 / BCRC 21394 / JCM 1990 / NBRC 0083 / IGC 2968) (Yeast).